A 194-amino-acid chain; its full sequence is Molybdenum cofactor guanylyltransferase (194 aa).

Residues 12-14, lysine 25, aspartate 71, and aspartate 101 each bind GTP; that span reads LAG. A Mg(2+)-binding site is contributed by aspartate 101.

The protein belongs to the MobA family. As to quaternary structure, monomer. The cofactor is Mg(2+).

It is found in the cytoplasm. The catalysed reaction is Mo-molybdopterin + GTP + H(+) = Mo-molybdopterin guanine dinucleotide + diphosphate. In terms of biological role, transfers a GMP moiety from GTP to Mo-molybdopterin (Mo-MPT) cofactor (Moco or molybdenum cofactor) to form Mo-molybdopterin guanine dinucleotide (Mo-MGD) cofactor. The polypeptide is Molybdenum cofactor guanylyltransferase (Salmonella typhimurium (strain LT2 / SGSC1412 / ATCC 700720)).